The sequence spans 123 residues: Methicillin resistance regulatory protein MecI (123 aa).

The H-T-H motif DNA-binding region spans 7 to 71 (EISSAEWEVM…KDNKIFQYYS (65 aa)). Residues 74–123 (EESDIKYKTSKNFINKVYKGGFNSLVLNFVEKEDLSQDEIEELRNILNKK) are important for dimerization.

This sequence belongs to the BlaI transcriptional regulatory family. Monomer and homodimer. In terms of processing, upon exposure to beta-lactams, proteolytic cleavage at a single site impairs dimerization and abolishes repressor activity.

The protein localises to the cytoplasm. Transcriptional repressor that constitutively blocks the transcription of the gene for the penicillin-binding protein MecA. Binds DNA as a dimer. The chain is Methicillin resistance regulatory protein MecI (mecI) from Mammaliicoccus sciuri (Staphylococcus sciuri).